A 64-amino-acid polypeptide reads, in one-letter code: Large ribosomal subunit protein uL29 (64 aa).

Belongs to the universal ribosomal protein uL29 family.

The polypeptide is Large ribosomal subunit protein uL29 (Cupriavidus metallidurans (strain ATCC 43123 / DSM 2839 / NBRC 102507 / CH34) (Ralstonia metallidurans)).